A 358-amino-acid polypeptide reads, in one-letter code: Mitogen-activated protein kinase hog-1 (358 aa).

The 280-residue stretch at 20–299 (YSDLQPVGMG…ATEALSHEYL (280 aa)) folds into the Protein kinase domain. ATP is bound by residues 26-34 (VGMGAFGLV) and K49. The active-site Proton acceptor is D141. T171 carries the phosphothreonine modification. A TXY motif is present at residues 171–173 (TGY). Phosphotyrosine is present on Y173.

It belongs to the protein kinase superfamily. Ser/Thr protein kinase family. MAP kinase subfamily. HOG1 sub-subfamily. The cofactor is Mg(2+). Post-translationally, dually phosphorylated on Thr-171 and Tyr-173, which activates the enzyme. Phosphorylation is induced by fungicides and osmotic stress.

The protein localises to the cytoplasm. Its subcellular location is the nucleus. It catalyses the reaction L-seryl-[protein] + ATP = O-phospho-L-seryl-[protein] + ADP + H(+). The catalysed reaction is L-threonyl-[protein] + ATP = O-phospho-L-threonyl-[protein] + ADP + H(+). With respect to regulation, activated by tyrosine and threonine phosphorylation. Functionally, proline-directed serine/threonine-protein kinase involved in a signal transduction pathway that is activated by changes in the osmolarity of the extracellular environment. Controls osmotic regulation of transcription of target genes. Involved in ion flux-mediated turgor regulation. This chain is Mitogen-activated protein kinase hog-1 (hog-1), found in Neurospora crassa (strain ATCC 24698 / 74-OR23-1A / CBS 708.71 / DSM 1257 / FGSC 987).